The sequence spans 689 residues: MSEKTFLVEIGTEELPPKALRSLAESFAANFTAELDNAGLAHGNVEWFAAPRRLALKVANLAESQPDREVEKRGPAIAQAFDAEGKPSKAAEGWARGCGITVDQAERLKTDKGEWLLYRAHVKGESTEALVPNMVATSLAKLPIPKLMRWGASDVHFVRPVHTVTLLLGDKVIPATILGIQSDRVIRGHRFMGEPEFTIDNADQYPQILLERGKVIADYEARKAKIKADAEEAARKIGGNADLSESLLEEVASLVEWPVVLTAKFEEKFLAVPAEALVYTMKGDQKYFPVYDNAGKLLPNFIFVANIESKDPTQIISGNEKVVRPRLADAEFFFNTDRKKRLEDHLPRLQTVLFQQQLGTLRDKTDRIQALAGWIAGQIGADVNHATRAGLLSKCDLMTNMVFEFTDTQGVMGMHYARHDGEAEDVAVALNEQYQPRFAGDDLPSNPVACALAIADKMDTLAGIFGIGQHPKGDKDPFALRRAALGVLRIIVEKNLALDLQTLTEEAVRLYGDKLTNANVVDDVIDFMLGRFRAWYQDEGYTVDTIQAVLARRPTRPADFDARMKAVSHFRTLEEASALAAANKRVSNILAKATEPLNDIVHASVLKEAAEIELARHLVVLRDKLQPYFADGRYQEALIELAALRAPVDEFFENVMVNAEEKDIRINRLTLLSKLRELFLQVADISLLQ.

It belongs to the class-II aminoacyl-tRNA synthetase family. In terms of assembly, tetramer of two alpha and two beta subunits.

It localises to the cytoplasm. It carries out the reaction tRNA(Gly) + glycine + ATP = glycyl-tRNA(Gly) + AMP + diphosphate. The chain is Glycine--tRNA ligase beta subunit from Salmonella heidelberg (strain SL476).